Here is a 415-residue protein sequence, read N- to C-terminus: MAVSTSHFRSLCASSRSLSRTGIVAPISCRGYATTEPSPSATSTTTTTTARRRTTFKDKLNAGPSFADFVGNDNAPLDPSEAYALKTALVGPAGRKKEMTRLPSWLKTPIPDSKNYQRLKKDLRGLNLHTVCEEARCPNISDCWGGSDKSAATATIMLMGDTCTRGCRFCSVKTSRTPSPLDPHEPENTAEAISRWGLGYVVLTSVDRDDLADGGARHFAETVMKIKQKAPSILVECLTGDYAGDLEMVKLVARSGLDVYAHNVETVEALTPQVRDRRANFQQSIRVLEAAKNAQPSLITKTSLMLGLGETDEQLWDALRQLRVVNVDVVTFGQYMRPTKRHMAVHEYVTPDRFELWRQRALDMGFLYCASGPLVRSSYKAGEAFIENVLKKRRAASGSTETVGVRPVAVDEVTR.

Residues 1 to 32 (MAVSTSHFRSLCASSRSLSRTGIVAPISCRGY) constitute a mitochondrion transit peptide. Residues 30–50 (RGYATTEPSPSATSTTTTTTA) are disordered. Residues 33–49 (ATTEPSPSATSTTTTTT) are compositionally biased toward low complexity. [4Fe-4S] cluster is bound by residues cysteine 132, cysteine 137, cysteine 143, cysteine 163, cysteine 167, cysteine 170, and serine 378. Residues 146–367 (GSDKSAATAT…RQRALDMGFL (222 aa)) form the Radical SAM core domain.

It belongs to the radical SAM superfamily. Lipoyl synthase family. It depends on [4Fe-4S] cluster as a cofactor.

The protein resides in the mitochondrion. The catalysed reaction is [[Fe-S] cluster scaffold protein carrying a second [4Fe-4S](2+) cluster] + N(6)-octanoyl-L-lysyl-[protein] + 2 oxidized [2Fe-2S]-[ferredoxin] + 2 S-adenosyl-L-methionine + 4 H(+) = [[Fe-S] cluster scaffold protein] + N(6)-[(R)-dihydrolipoyl]-L-lysyl-[protein] + 4 Fe(3+) + 2 hydrogen sulfide + 2 5'-deoxyadenosine + 2 L-methionine + 2 reduced [2Fe-2S]-[ferredoxin]. Its pathway is protein modification; protein lipoylation via endogenous pathway; protein N(6)-(lipoyl)lysine from octanoyl-[acyl-carrier-protein]: step 2/2. In terms of biological role, catalyzes the radical-mediated insertion of two sulfur atoms into the C-6 and C-8 positions of the octanoyl moiety bound to the lipoyl domains of lipoate-dependent enzymes, thereby converting the octanoylated domains into lipoylated derivatives. This is Lipoyl synthase, mitochondrial from Neosartorya fischeri (strain ATCC 1020 / DSM 3700 / CBS 544.65 / FGSC A1164 / JCM 1740 / NRRL 181 / WB 181) (Aspergillus fischerianus).